The chain runs to 363 residues: Histidinol-phosphate aminotransferase (363 aa).

K218 carries the post-translational modification N6-(pyridoxal phosphate)lysine.

The protein belongs to the class-II pyridoxal-phosphate-dependent aminotransferase family. Histidinol-phosphate aminotransferase subfamily. Homodimer. The cofactor is pyridoxal 5'-phosphate.

It carries out the reaction L-histidinol phosphate + 2-oxoglutarate = 3-(imidazol-4-yl)-2-oxopropyl phosphate + L-glutamate. It participates in amino-acid biosynthesis; L-histidine biosynthesis; L-histidine from 5-phospho-alpha-D-ribose 1-diphosphate: step 7/9. The polypeptide is Histidinol-phosphate aminotransferase (Xanthomonas axonopodis pv. citri (strain 306)).